Reading from the N-terminus, the 72-residue chain is Lantibiotic lichenicidin VK21 A2 (72 aa).

A disordered region spans residues 1–21 (MKTMKNSAAREAFKGANHPAG). Positions 1–40 (MKTMKNSAAREAFKGANHPAGMVSEEELKALVGGNDVNPE) are excised as a propeptide. Residue T41 is modified to 2-oxobutanoic acid. (Z)-2,3-didehydrobutyrine occurs at positions 42, 45, and 46. Residues 47-51 (SSWTC) constitute a cross-link (lanthionine (Ser-Cys)). The residue at position 48 (S48) is a 2,3-didehydroalanine (Ser). T53 and T57 each carry (Z)-2,3-didehydrobutyrine. Residues 59–63 (SASLC) constitute a cross-link (lanthionine (Ser-Cys)). 2 consecutive cross-links (beta-methyllanthionine (Thr-Cys)) follow at residues 65 to 68 (TTKC) and 69 to 72 (TSRC). The residue at position 66 (T66) is a (Z)-2,3-didehydrobutyrine.

In terms of processing, maturation of lantibiotics involves the enzymatic conversion of Thr, and Ser into dehydrated AA and the formation of thioether bonds with cysteine. This is followed by membrane translocation and cleavage of the modified precursor. Post-translationally, the 2,3-didehydrobutyrines are determined to be the Z-isomers.

Its subcellular location is the secreted. In terms of biological role, lanthionine-containing peptide antibiotic (lantibiotic) active on Gram-positive bacteria. The bactericidal activity of lantibiotics is based on depolarization of energized bacterial cytoplasmic membranes, initiated by the formation of aqueous transmembrane pores. When present individually, LchA2 exhibits activity towards B.subtilis L1 (IC(50)=30 uM), Rhodococcus sp. SS2 (IC(50)=16.6 uM), M.luteus B1314 (IC(50)=2.6 uM), B.megaterium VKM41 (IC(50)=2 uM), S.aureus 209p (IC(50)=20 uM), B.pumilus 2001, B.globigii I, B.amyloliquefaciens I, M.smegmatis 1171 and M.phlei 1291. However, when combined with LchA1, it displays much stronger activity against B.subtilis L1 (IC(50)=0.64 uM), Rhodococcus sp. SS2 (IC(50)=0.64 uM), M.luteus B1314 (IC(50)=0.09 uM), B.megaterium VKM41 (IC(50)=0.12 uM) and S.aureus 209p (IC(50)=0.64 uM). The activity of the combined LchA1 and LchA2 peptides is strongest at a molar ratio of 1. Even when applied at 17-fold concentration of the highest IC(50) values for Gram-positive bacteria, neither the individual nor the combined peptides display activity against Gram-negative bacteria P.aeruginosa PAO1, P.putida I-97 or E.coli C600. The sequence is that of Lantibiotic lichenicidin VK21 A2 from Bacillus licheniformis.